Here is a 358-residue protein sequence, read N- to C-terminus: Probable cinnamyl alcohol dehydrogenase (358 aa).

Cys-48 contributes to the Zn(2+) binding site. An NADP(+)-binding site is contributed by Ser-50. Zn(2+) contacts are provided by His-70, Glu-71, Cys-101, Cys-104, Cys-107, Cys-115, and Cys-164. NADP(+) contacts are provided by residues Thr-168, 189–194 (GLGGVG), 212–217 (SSSDKK), Thr-252, Gly-276, and 299–301 (SFV).

This sequence belongs to the zinc-containing alcohol dehydrogenase family. Homodimer. The cofactor is Zn(2+). Most actively expressed in stem, hypocotyl and root tissue.

The catalysed reaction is (E)-cinnamyl alcohol + NADP(+) = (E)-cinnamaldehyde + NADPH + H(+). It catalyses the reaction (E)-coniferol + NADP(+) = (E)-coniferaldehyde + NADPH + H(+). It carries out the reaction (E)-sinapyl alcohol + NADP(+) = (E)-sinapaldehyde + NADPH + H(+). The enzyme catalyses (E)-4-coumaroyl alcohol + NADP(+) = (E)-4-coumaraldehyde + NADPH + H(+). The catalysed reaction is (E)-caffeyl alcohol + NADP(+) = (E)-caffeyl aldehyde + NADPH + H(+). It functions in the pathway aromatic compound metabolism; phenylpropanoid biosynthesis. Its function is as follows. This protein catalyzes the final step in a branch of phenylpropanoid synthesis specific for production of lignin monomers. It acts on coniferyl-, sinapyl-, 4-coumaryl- and cinnamyl-alcohol. The protein is Probable cinnamyl alcohol dehydrogenase (CAD2) of Medicago sativa (Alfalfa).